The following is a 590-amino-acid chain: Selenoprotein N (590 aa).

The tract at residues 1–26 is disordered; it reads MGRARPGQRGPPSPGPAAQPPAPPRR. Residues 1-43 form the signal peptide; the sequence is MGRARPGQRGPPSPGPAAQPPAPPRRRARSLALLGALLAAAAA. The span at 9–23 shows a compositional bias: pro residues; it reads RGPPSPGPAAQPPAP. The 36-residue stretch at 67-102 folds into the EF-hand domain; that stretch reads TLGTDGLFLFSSLDTDGDMYISPEEFKPIAEKLTGS. An N-linked (GlcNAc...) asparagine glycan is attached at Asn-126. Residue Sec-127 is a non-standard amino acid, selenocysteine. Asn-190 carries an N-linked (GlcNAc...) asparagine glycan. Position 462 (Sec-462) is a non-standard amino acid, selenocysteine. 3 N-linked (GlcNAc...) asparagine glycosylation sites follow: Asn-483, Asn-505, and Asn-531.

In terms of assembly, interacts with RYR1, RYR2 and RYR3. Post-translationally, N-glycosylated. As to expression, isoform 1 and isoform 2 are expressed in skeletal muscle, brain, lung and placenta. Isoform 2 is also expressed in heart, diaphragm and stomach.

The protein localises to the endoplasmic reticulum membrane. In terms of biological role, plays an important role in cell protection against oxidative stress and in the regulation of redox-related calcium homeostasis. Regulates the calcium level of the ER by protecting the calcium pump ATP2A2 against the oxidoreductase ERO1A-mediated oxidative damage. Within the ER, ERO1A activity increases the concentration of H(2)O(2), which attacks the luminal thiols in ATP2A2 and thus leads to cysteinyl sulfenic acid formation (-SOH) and SEPN1 reduces the SOH back to free thiol (-SH), thus restoring ATP2A2 activity. Acts as a modulator of ryanodine receptor (RyR) activity: protects RyR from oxidation due to increased oxidative stress, or directly controls the RyR redox state, regulating the RyR-mediated calcium mobilization required for normal muscle development and differentiation. Essential for muscle regeneration and satellite cell maintenance in skeletal muscle. The polypeptide is Selenoprotein N (Homo sapiens (Human)).